The following is a 335-amino-acid chain: Probable tRNA N6-adenosine threonylcarbamoyltransferase (335 aa).

The a divalent metal cation site is built by His109, His113, and Tyr130. Residues Tyr130 to Gly134, Asp162, Gly177, Glu181, and Asn266 contribute to the substrate site. Asp294 provides a ligand contact to a divalent metal cation.

This sequence belongs to the KAE1 / TsaD family. Component of the EKC/KEOPS complex; the whole complex dimerizes. A divalent metal cation serves as cofactor.

The protein resides in the cytoplasm. It localises to the nucleus. It carries out the reaction L-threonylcarbamoyladenylate + adenosine(37) in tRNA = N(6)-L-threonylcarbamoyladenosine(37) in tRNA + AMP + H(+). In terms of biological role, component of the EKC/KEOPS complex that is required for the formation of a threonylcarbamoyl group on adenosine at position 37 (t(6)A37) in tRNAs that read codons beginning with adenine. The complex is probably involved in the transfer of the threonylcarbamoyl moiety of threonylcarbamoyl-AMP (TC-AMP) to the N6 group of A37. Osgep likely plays a direct catalytic role in this reaction, but requires other protein(s) of the complex to fulfill this activity. The chain is Probable tRNA N6-adenosine threonylcarbamoyltransferase from Nematostella vectensis (Starlet sea anemone).